A 1014-amino-acid polypeptide reads, in one-letter code: UvrABC system protein A (1014 aa).

Gly-32–Ser-39 lines the ATP pocket. ABC transporter domains follow at residues Trp-314–Gln-592 and Gln-612–Arg-941. Gly-645–Ser-652 is a binding site for ATP. A C4-type zinc finger spans residues Cys-744 to Cys-770. The span at Thr-976–Thr-995 shows a compositional bias: low complexity. The disordered stretch occupies residues Thr-976 to Ala-1014. The segment covering Ala-996–Ala-1014 has biased composition (basic residues).

Belongs to the ABC transporter superfamily. UvrA family. As to quaternary structure, forms a heterotetramer with UvrB during the search for lesions.

The protein localises to the cytoplasm. Its function is as follows. The UvrABC repair system catalyzes the recognition and processing of DNA lesions. UvrA is an ATPase and a DNA-binding protein. A damage recognition complex composed of 2 UvrA and 2 UvrB subunits scans DNA for abnormalities. When the presence of a lesion has been verified by UvrB, the UvrA molecules dissociate. The sequence is that of UvrABC system protein A from Streptomyces coelicolor (strain ATCC BAA-471 / A3(2) / M145).